The following is a 332-amino-acid chain: UDP-N-acetylenolpyruvoylglucosamine reductase (332 aa).

Residues 45-243 form the FAD-binding PCMH-type domain; it reads RAGGHAAYFY…LGTRIKTQPL (199 aa). Residue Arg194 is part of the active site. Catalysis depends on Ser250, which acts as the Proton donor. Glu320 is an active-site residue.

Belongs to the MurB family. It depends on FAD as a cofactor.

The protein localises to the cytoplasm. The catalysed reaction is UDP-N-acetyl-alpha-D-muramate + NADP(+) = UDP-N-acetyl-3-O-(1-carboxyvinyl)-alpha-D-glucosamine + NADPH + H(+). It participates in cell wall biogenesis; peptidoglycan biosynthesis. In terms of biological role, cell wall formation. This chain is UDP-N-acetylenolpyruvoylglucosamine reductase, found in Nitrosomonas eutropha (strain DSM 101675 / C91 / Nm57).